The primary structure comprises 282 residues: Elongation factor Ts (282 aa).

Residues 80-83 form an involved in Mg(2+) ion dislocation from EF-Tu region; sequence TDFV.

Belongs to the EF-Ts family.

It localises to the cytoplasm. In terms of biological role, associates with the EF-Tu.GDP complex and induces the exchange of GDP to GTP. It remains bound to the aminoacyl-tRNA.EF-Tu.GTP complex up to the GTP hydrolysis stage on the ribosome. This chain is Elongation factor Ts (tsf), found in Pasteurella multocida (strain Pm70).